The primary structure comprises 230 residues: MAAQAQAPARDGGAQLAGPAAEADPLGRFTCPVCLEVYEKPVQVPCGHVFCSACLQECLKPKKPVCGVCRSALAPGVRAVELERQIESTETSCHGCRKNFFLSKIRAHVATCSKYQNYIMEGVKATTKDASRQPRSVPNRYTFPCPYCPEKNFDQEGLVEHCKLSHSTDTKSVVCPICASMPWGDPNYRSANFIEHLQRRHQFSYDTFVDYDVDEEDMINQVLQRSIIDQ.

Residues 31–70 form an RING-type zinc finger; sequence CPVCLEVYEKPVQVPCGHVFCSACLQECLKPKKPVCGVCR. 2 residues coordinate Zn(2+): Cys93 and Cys96. A C2HC RNF-type zinc finger spans residues 93 to 112; that stretch reads CHGCRKNFFLSKIRAHVATC. Position 104 is an N6-acetyllysine (Lys104). Zn(2+) is bound by residues His108 and Cys112. N6-acetyllysine is present on Lys114.

Interacts with XAF1, the interaction increases XAF1 stability and proapoptotic effects, and may regulate IFN signaling. In terms of processing, autoubiquitinated. Polyubiquitinated in the presence of E2 enzymes UBE2D1, UBE2D2 and UBE2D3, but only monoubiquitinated in the presence of UBE2E1.

It localises to the cytoplasm. The protein resides in the nucleus. It catalyses the reaction S-ubiquitinyl-[E2 ubiquitin-conjugating enzyme]-L-cysteine + [acceptor protein]-L-lysine = [E2 ubiquitin-conjugating enzyme]-L-cysteine + N(6)-ubiquitinyl-[acceptor protein]-L-lysine.. Its pathway is protein modification; protein ubiquitination. Its function is as follows. E3 ubiquitin-protein ligase that promotes the ubiquitination of various substrates. In turn, participates in the regulation of many biological processes including cell cycle, apoptosis, osteoclastogenesis as well as innate or adaptive immunity. Acts as negative regulator of NF-kappa-B-dependent transcription by promoting the ubiquitination and stabilization of the NF-kappa-B inhibitor TNFAIP3. May promote the ubiquitination of TRAF6 as well. Also acts as a negative regulator of T-cell activation. Inhibits cellular dsRNA responses and interferon production by targeting MAVS component for proteasomal degradation. Ubiquitinates the CDK inhibitor CDKN1A leading to its degradationand probably also CDKN1B and CDKN1C. This activity stimulates cell cycle G1-to-S phase transition and suppresses cellular senescence. May play a role in spermatogenesis. The polypeptide is E3 ubiquitin-protein ligase RNF114 (RNF114) (Bos taurus (Bovine)).